Here is a 619-residue protein sequence, read N- to C-terminus: Pescadillo homolog (619 aa).

A disordered region spans residues 303–324 (ADKDQKDQDTIEDAEEVTEPTV). Residues 312–324 (TIEDAEEVTEPTV) show a composition bias toward acidic residues. The BRCT domain occupies 353–452 (PTSQLFSKFI…ELVSVGDYAP (100 aa)). The disordered stretch occupies residues 456 to 567 (LPPHLSPWGD…STKAALTPEE (112 aa)). Coiled coils occupy residues 472–560 (NAKA…ASTK) and 588–619 (MQYG…LKDV). Residues 480 to 522 (EAEEEEEEEEEDEEEEEEEEEIEVADGDEDQDDEEEEEIEDED) are compositionally biased toward acidic residues. The span at 523–539 (LKAQKELEMEVAGKKFS) shows a compositional bias: basic and acidic residues.

Belongs to the pescadillo family. Component of the NOP7 complex, composed of ERB1, NOP7 and YTM1. The complex is held together by ERB1, which interacts with NOP7 via its N-terminal domain and with YTM1 via a high-affinity interaction between the seven-bladed beta-propeller domains of the 2 proteins. The NOP7 complex associates with the 66S pre-ribosome.

It is found in the nucleus. It localises to the nucleolus. Its subcellular location is the nucleoplasm. Its function is as follows. Component of the NOP7 complex, which is required for maturation of the 25S and 5.8S ribosomal RNAs and formation of the 60S ribosome. The polypeptide is Pescadillo homolog (Lodderomyces elongisporus (strain ATCC 11503 / CBS 2605 / JCM 1781 / NBRC 1676 / NRRL YB-4239) (Yeast)).